The chain runs to 1054 residues: DNA-directed RNA polymerase subunit beta' (1054 aa).

Residues Asp383, Asp385, and Asp387 each contribute to the Mg(2+) site. Positions 752, 826, 833, and 836 each coordinate Zn(2+).

Belongs to the RNA polymerase beta' chain family. In terms of assembly, the RNAP catalytic core consists of 2 alpha, 1 beta, 1 beta' and 1 omega subunit. When a sigma factor is associated with the core the holoenzyme is formed, which can initiate transcription. Mg(2+) is required as a cofactor. Requires Zn(2+) as cofactor.

The catalysed reaction is RNA(n) + a ribonucleoside 5'-triphosphate = RNA(n+1) + diphosphate. In terms of biological role, DNA-dependent RNA polymerase catalyzes the transcription of DNA into RNA using the four ribonucleoside triphosphates as substrates. This chain is DNA-directed RNA polymerase subunit beta', found in Weissella paramesenteroides (Leuconostoc paramesenteroides).